A 130-amino-acid chain; its full sequence is Small ribosomal subunit protein uS9 (130 aa).

The protein belongs to the universal ribosomal protein uS9 family.

This Janthinobacterium sp. (strain Marseille) (Minibacterium massiliensis) protein is Small ribosomal subunit protein uS9.